The following is a 407-amino-acid chain: MAMFVRTSSSTHDEERMLPIEGAPRRRPPVKFIFPPPPLSSLPGFGRPRGYAGPTVIDMSAPDDVFAEDTPSPPATPLDLQISPDQSSGESEYDEDEEDEDEEENDDVQEEDEPEGYPADFFQPLSHLRPRPLARRAHTPKPVAVVAGRVRSSTDTAESEASMGWVSQDDGFSPAGLSPSDDEGVAILEPMAAYTGTGAYGLSPASRNSVPGTQSSPYSDPDEGPSWRPLRAAPTAIVDLTSDSDSDDSSNSPDVNNEAAFTDARHFSHQPPSSEEDGEDQGEVLSQRIGLMDVGQKRKRQSTASSGSEDVVRCQRQPNLSRKAVASVIIISSGSDTDEEPSSAVSVIVSPSSTKGHLPTQSPSTSAHSISSGSTTTAGSRCSDPTRILASTPPLCGNGAYNWPWLD.

The span at Met1–Ser10 shows a compositional bias: polar residues. 3 disordered regions span residues Met1 to Glu183, Gly196 to Pro318, and Ser332 to Asp407. At Ser41 the chain carries Phosphoserine; by host TBK1 and IKKE. Positions Ser91–Glu115 are enriched in acidic residues. The span at Leu128 to Thr139 shows a compositional bias: basic residues. Residue Ser162 is modified to Phosphoserine; by host TBK1 and IKKE. Over residues Ala205–Tyr218 the composition is skewed to polar residues. The short motif at Val284–Val294 is the Nuclear export signal element. The short motif at Lys297–Arg300 is the Nuclear localization signal element. Low complexity-rich tracts occupy residues Ser342 to Ser353 and Thr360 to Ser383.

Interacts with host IRF7. Interacts with host RPS6KA1. Interacts with host RAB11FIP5; this interaction results in the lysosomal degradation of ORF45 and the inhibition of viral particle release. Interacts with host p53/TP53; this interaction down-regulates p53/TP53 signaling pathway. Interacts with the N-terminal part of host NLRP1; relieving autoinhibition of the NLRP1 inflammasome. Post-translationally, phosphorylated on Ser-41 and Ser-162 by host IKBKE and TBK1.

The protein localises to the virion tegument. It localises to the host cytoplasm. It is found in the host nucleus. The protein resides in the host Golgi apparatus. Its function is as follows. Prevents the establishment of cellular antiviral state by blocking virus-induced phosphorylation and activation of host interferon regulatory factor 7/IRF7, a transcription factor critical for the induction of interferons alpha and beta. Mechanistically, ORF45 competes with the associated IRF7 and inhibits its phosphorylation by IKBKE or TBK1 by acting as an alternative substrate. Acts as an activator of the NLRP1 inflammasome via interaction with the N-terminal part of host NLRP1: interaction promotes translocation of the N-terminal part of NLRP1 into the nucleus, relieving autoinhibition of the NLRP1 inflammasome and leading to its activation. Also plays a role in promoting the late transcription and translation of viral lytic genes by constitutively activating host extracellular signal-regulated kinase (ERK)-p90 ribosomal S6 kinase/RPS6KA1. In addition, supports the viral replication cycle by modulating host p53/TP53 signaling pathway. Interacts with host p53/TP53 and prevents its interaction with the deubiquitinase USP7, leading to sequestration of P53/TP53 in the host cytoplasm thereby diminishing its transcriptional activity. The protein is Protein ORF45 (ORF45) of Homo sapiens (Human).